Here is a 62-residue protein sequence, read N- to C-terminus: Large ribosomal subunit protein bL28 (62 aa).

A disordered region spans residues 1–28 (MARVCTITGRKARSGNSRSHAMNATKRK).

The protein belongs to the bacterial ribosomal protein bL28 family.

This chain is Large ribosomal subunit protein bL28, found in Bacillus anthracis (strain CDC 684 / NRRL 3495).